The sequence spans 348 residues: GMP reductase (348 aa).

An NADP(+)-binding site is contributed by 108-131; that stretch reads ADFIKLRQILALSPSLKFICIDVA. K(+) contacts are provided by G181 and G183. Catalysis depends on C186, which acts as the Thioimidate intermediate. 216–239 contributes to the NADP(+) binding site; sequence IVSDGGCTMPGDVAKAFGGGADFV.

This sequence belongs to the IMPDH/GMPR family. GuaC type 1 subfamily. In terms of assembly, homotetramer.

It carries out the reaction IMP + NH4(+) + NADP(+) = GMP + NADPH + 2 H(+). Its function is as follows. Catalyzes the irreversible NADPH-dependent deamination of GMP to IMP. It functions in the conversion of nucleobase, nucleoside and nucleotide derivatives of G to A nucleotides, and in maintaining the intracellular balance of A and G nucleotides. This chain is GMP reductase, found in Edwardsiella ictaluri (strain 93-146).